The sequence spans 575 residues: 2-isopropylmalate synthase (575 aa).

The region spanning 40–314 is the Pyruvate carboxyltransferase domain; the sequence is PRWCAVDLRD…DPQIDFSDID (275 aa). Mg(2+) contacts are provided by Asp49, His253, His255, and Asn289. Residues 456–575 are regulatory domain; sequence SGSGTPEWGR…IVSAVNRALR (120 aa).

The protein belongs to the alpha-IPM synthase/homocitrate synthase family. LeuA type 2 subfamily. In terms of assembly, homodimer. Mg(2+) serves as cofactor.

It is found in the cytoplasm. It catalyses the reaction 3-methyl-2-oxobutanoate + acetyl-CoA + H2O = (2S)-2-isopropylmalate + CoA + H(+). The protein operates within amino-acid biosynthesis; L-leucine biosynthesis; L-leucine from 3-methyl-2-oxobutanoate: step 1/4. Its function is as follows. Catalyzes the condensation of the acetyl group of acetyl-CoA with 3-methyl-2-oxobutanoate (2-ketoisovalerate) to form 3-carboxy-3-hydroxy-4-methylpentanoate (2-isopropylmalate). This chain is 2-isopropylmalate synthase, found in Kineococcus radiotolerans (strain ATCC BAA-149 / DSM 14245 / SRS30216).